The primary structure comprises 193 residues: Holliday junction branch migration complex subunit RuvA (193 aa).

Residues 1 to 63 are domain I; sequence MYAYLKGKIM…EDAQLLYGFK (63 aa). The tract at residues 64–141 is domain II; sequence DEEEKAMFNA…TITDESELFK (78 aa). Residues 141 to 142 are flexible linker; sequence KE. The domain III stretch occupies residues 143–193; that stretch reads VNDTLLNEALLAFEALGYSKREITKIEKELKKKQFSTVDEYVKQGLQMFVS.

Belongs to the RuvA family. Homotetramer. Forms an RuvA(8)-RuvB(12)-Holliday junction (HJ) complex. HJ DNA is sandwiched between 2 RuvA tetramers; dsDNA enters through RuvA and exits via RuvB. An RuvB hexamer assembles on each DNA strand where it exits the tetramer. Each RuvB hexamer is contacted by two RuvA subunits (via domain III) on 2 adjacent RuvB subunits; this complex drives branch migration. In the full resolvosome a probable DNA-RuvA(4)-RuvB(12)-RuvC(2) complex forms which resolves the HJ.

The protein resides in the cytoplasm. Its function is as follows. The RuvA-RuvB-RuvC complex processes Holliday junction (HJ) DNA during genetic recombination and DNA repair, while the RuvA-RuvB complex plays an important role in the rescue of blocked DNA replication forks via replication fork reversal (RFR). RuvA specifically binds to HJ cruciform DNA, conferring on it an open structure. The RuvB hexamer acts as an ATP-dependent pump, pulling dsDNA into and through the RuvAB complex. HJ branch migration allows RuvC to scan DNA until it finds its consensus sequence, where it cleaves and resolves the cruciform DNA. In Macrococcus caseolyticus (strain JCSC5402) (Macrococcoides caseolyticum), this protein is Holliday junction branch migration complex subunit RuvA.